A 671-amino-acid polypeptide reads, in one-letter code: Oviduct-specific glycoprotein (671 aa).

A signal peptide spans 1-21 (MGRLLLWVGLVLLMKPNDGTA). Positions 22–385 (YKLVCYFTNW…HILNELLVRA (364 aa)) constitute a GH18 domain. Cys26 and Cys51 form a disulfide bridge. Residues 71–72 (LQ), 98–101 (GGWN), Tyr142, 211–214 (LSYD), and Trp355 each bind chitin. A glycan (N-linked (GlcNAc...) asparagine) is linked at Asn402. 8 tandem repeats follow at residues 490–504 (TGMT…AGRE), 505–519 (TMTT…PGGE), 520–534 (TMTT…PGGE), 535–549 (TVTT…PGGE), 550–564 (TMTT…PGGE), 565–579 (TVTI…PVGE), 580–594 (TVTI…PGGQ), and 595–609 (TTAT…PPGM). Positions 490–609 (TGMTVTVQTQ…GSQSVTPPGM (120 aa)) are 8 X 15 AA tandem repeats. 6 N-linked (GlcNAc...) asparagine glycosylation sites follow: Asn511, Asn526, Asn541, Asn556, Asn571, and Asn586.

It belongs to the glycosyl hydrolase 18 family. Highly O-glycosylated and also N-glycosylated. Oviduct.

The protein localises to the cytoplasmic vesicle. Its subcellular location is the secretory vesicle. Functionally, binds to oocyte zona pellucida in vivo. May play a role in the fertilization process and/or early embryonic development. Might act as a protective secretion influencing the first steps of the reproductive process necessary for the normal triggering of fertilization and early embryonic development. The sequence is that of Oviduct-specific glycoprotein (OVGP1) from Mesocricetus auratus (Golden hamster).